A 106-amino-acid polypeptide reads, in one-letter code: NADH-quinone oxidoreductase subunit K (106 aa).

A run of 3 helical transmembrane segments spans residues 8–28, 35–55, and 66–86; these read IGIENYIYLCVVLFCIGIFGV, IIMFMSIEIMLNAVNLLFVAF, and VFVFFSMAVAAAEVAVGLAIL.

It belongs to the complex I subunit 4L family. In terms of assembly, NDH-1 is composed of 14 different subunits. Subunits NuoA, H, J, K, L, M, N constitute the membrane sector of the complex.

It is found in the cell inner membrane. The enzyme catalyses a quinone + NADH + 5 H(+)(in) = a quinol + NAD(+) + 4 H(+)(out). In terms of biological role, NDH-1 shuttles electrons from NADH, via FMN and iron-sulfur (Fe-S) centers, to quinones in the respiratory chain. The immediate electron acceptor for the enzyme in this species is believed to be a menaquinone. Couples the redox reaction to proton translocation (for every two electrons transferred, four hydrogen ions are translocated across the cytoplasmic membrane), and thus conserves the redox energy in a proton gradient. This Flavobacterium psychrophilum (strain ATCC 49511 / DSM 21280 / CIP 103535 / JIP02/86) protein is NADH-quinone oxidoreductase subunit K.